The sequence spans 979 residues: MAEAFIQVVLDNLTSFLKGELVLLFGFQDEFQRLSSMFSTIQAVLEDAQEKQLNDKPLENWLQKLNAATYEVDDILDEYKTKATRFLQSEYGRYHPKVIPFRHKVGKRMDQVMKKLNAIAEERKKFHLQEKIIERQAATRETGSVLTEPQVYGRDKEKDEIVKILINTASDAQKLSVLPILGMGGLGKTTLSQMVFNDQRVTERFYPKIWICISDDFNEKRLIKAIVESIEGKSLSDMDLAPLQKKLQELLNGKRYFLVLDDVWNEDQHKWANLRAVLKVGASGAFVLTTTRLEKVGSIMGTLQPYELSNLSPEDCWFLFMQRAFGHQEEINPNLMAIGKEIVKKCGGVPLAAKTLGGILRFKREEREWEHVRDSPIWNLPQDESSILPALRLSYHHLPLDLRQCFVYCAVFPKDTKMAKENLIAFWMAHGFLLSKGNLELEDVGNEVWNELYLRSFFQEIEVESGKTYFKMHDLIHDLATSLFSANTSSSNIREINANYDGYMMSIGFAEVVSSYSPSLLQKFVSLRVLNLRNSNLNQLPSSIGDLVHLRYLDLSGNFRIRNLPKRLCKLQNLQTLDLHYCDSLSCLPKQTSKLGSLRNLLLDGCSLTSTPPRIGLLTCLKSLSCFVIGKRKGHQLGELKNLNLYGSISITKLDRVKKDTDAKEANLSAKANLHSLCLSWDLDGKHRYDSEVLEALKPHSNLKYLEINGFGGIRLPDWMNQSVLKNVVSIRIRGCENCSCLPPFGELPCLESLELHTGSADVEYVEDNVHPGRFPSLRKLVIWDFSNLKGLLKMEGEKQFPVLEEMTFYWCPMFVIPTLSSVKTLKVIVTDATVLRSISNLRALTSLDISDNVEATSLPEEMFKSLANLKYLKISFFRNLKELPTSLASLNALKSLKFEFCDALESLPEEGVKGLTSLTELSVSNCMMLKCLPEGLQHLTALTTLTITQCPIVFKRCERGIGEDWHKIAHIPYLTLYE.

The NB-ARC domain maps to 143-437; sequence GSVLTEPQVY…MAHGFLLSKG (295 aa). Residue 182 to 189 coordinates ATP; the sequence is GMGGLGKT. 12 LRR repeats span residues 524–547, 549–570, 571–594, 595–619, 637–661, 748–773, 823–841, 842–866, 868–890, 891–915, 917–939, and 940–965; these read FVSL…IGDL, HLRY…RLCK, LQNL…QTSK, LGSL…GLLT, LGEL…KKDT, LPCL…VHPG, VKTL…SISN, LRAL…MFKS, ANLK…SLAS, LNAL…GVKG, TSLT…GLQH, and LTAL…IGED.

Belongs to the disease resistance NB-LRR family.

Functionally, disease resistance protein. Resistance proteins guard the plant against pathogens that contain an appropriate avirulence protein via a direct or indirect interaction with this avirulence protein. That triggers a defense system which restricts the pathogen growth. The chain is Putative disease resistance protein RGA1 (RGA1) from Solanum bulbocastanum (Wild potato).